The primary structure comprises 578 residues: Phosphoenolpyruvate-protein phosphotransferase (578 aa).

Catalysis depends on His195, which acts as the Tele-phosphohistidine intermediate. Positions 302 and 338 each coordinate phosphoenolpyruvate. 2 residues coordinate Mg(2+): Glu437 and Asp461. Phosphoenolpyruvate-binding positions include 460–461 and Arg471; that span reads ND. The Proton donor role is filled by Cys508.

This sequence belongs to the PEP-utilizing enzyme family. As to quaternary structure, homodimer. Mg(2+) serves as cofactor.

The protein resides in the cytoplasm. The catalysed reaction is L-histidyl-[protein] + phosphoenolpyruvate = N(pros)-phospho-L-histidyl-[protein] + pyruvate. Functionally, general (non sugar-specific) component of the phosphoenolpyruvate-dependent sugar phosphotransferase system (sugar PTS). This major carbohydrate active-transport system catalyzes the phosphorylation of incoming sugar substrates concomitantly with their translocation across the cell membrane. Enzyme I transfers the phosphoryl group from phosphoenolpyruvate (PEP) to the phosphoryl carrier protein (HPr). The polypeptide is Phosphoenolpyruvate-protein phosphotransferase (ptsI) (Geobacillus stearothermophilus (Bacillus stearothermophilus)).